The chain runs to 254 residues: Undecaprenyl-diphosphatase 3 (254 aa).

Transmembrane regions (helical) follow at residues 8 to 28 (TEFL…LIGF), 33 to 53 (AKVF…VIFW), 74 to 94 (LHII…HSAI), 97 to 117 (VLFG…LMIV), 133 to 153 (ITYK…WPGF), 174 to 194 (AEYT…LDLI), 207 to 227 (LFAT…VSFL), and 233 to 253 (VKLT…YFFI).

The protein belongs to the UppP family.

The protein resides in the cell membrane. It catalyses the reaction di-trans,octa-cis-undecaprenyl diphosphate + H2O = di-trans,octa-cis-undecaprenyl phosphate + phosphate + H(+). Its function is as follows. Catalyzes the dephosphorylation of undecaprenyl diphosphate (UPP). Confers resistance to bacitracin. This chain is Undecaprenyl-diphosphatase 3, found in Bacillus thuringiensis (strain Al Hakam).